Here is a 302-residue protein sequence, read N- to C-terminus: Sulfate adenylyltransferase subunit 2 (302 aa).

Belongs to the PAPS reductase family. CysD subfamily. Heterodimer composed of CysD, the smaller subunit, and CysN.

It catalyses the reaction sulfate + ATP + H(+) = adenosine 5'-phosphosulfate + diphosphate. The protein operates within sulfur metabolism; hydrogen sulfide biosynthesis; sulfite from sulfate: step 1/3. Functionally, with CysN forms the ATP sulfurylase (ATPS) that catalyzes the adenylation of sulfate producing adenosine 5'-phosphosulfate (APS) and diphosphate, the first enzymatic step in sulfur assimilation pathway. APS synthesis involves the formation of a high-energy phosphoric-sulfuric acid anhydride bond driven by GTP hydrolysis by CysN coupled to ATP hydrolysis by CysD. The chain is Sulfate adenylyltransferase subunit 2 from Methylococcus capsulatus (strain ATCC 33009 / NCIMB 11132 / Bath).